A 151-amino-acid polypeptide reads, in one-letter code: Large ribosomal subunit protein uL15 (151 aa).

Residues 37 to 57 form a disordered region; the sequence is GMRGQKSRSGRPTRPGFEGGQ.

It belongs to the universal ribosomal protein uL15 family. In terms of assembly, part of the 50S ribosomal subunit.

Its function is as follows. Binds to the 23S rRNA. This Prochlorococcus marinus (strain MIT 9313) protein is Large ribosomal subunit protein uL15.